A 373-amino-acid polypeptide reads, in one-letter code: Chaperone protein DnaJ (373 aa).

A J domain is found at 5–70 (DYYEVLGVNR…QKRAAYDQYG (66 aa)). Residues 133–211 (GTETKIRIPV…CHGGGRVKQH (79 aa)) form a CR-type zinc finger. The Zn(2+) site is built by Cys-146, Cys-149, Cys-163, Cys-166, Cys-185, Cys-188, Cys-199, and Cys-202. CXXCXGXG motif repeat units lie at residues 146 to 153 (CETCHGSG), 163 to 170 (CSTCGGHG), 185 to 192 (CPKCHGSG), and 199 to 206 (CPTCHGGG). The segment at 346–373 (LEDINQQDSGKHSPREKSWMTKVKDFFQ) is disordered. Over residues 354–373 (SGKHSPREKSWMTKVKDFFQ) the composition is skewed to basic and acidic residues.

Belongs to the DnaJ family. As to quaternary structure, homodimer. The cofactor is Zn(2+).

The protein resides in the cytoplasm. Its function is as follows. Participates actively in the response to hyperosmotic and heat shock by preventing the aggregation of stress-denatured proteins and by disaggregating proteins, also in an autonomous, DnaK-independent fashion. Unfolded proteins bind initially to DnaJ; upon interaction with the DnaJ-bound protein, DnaK hydrolyzes its bound ATP, resulting in the formation of a stable complex. GrpE releases ADP from DnaK; ATP binding to DnaK triggers the release of the substrate protein, thus completing the reaction cycle. Several rounds of ATP-dependent interactions between DnaJ, DnaK and GrpE are required for fully efficient folding. Also involved, together with DnaK and GrpE, in the DNA replication of plasmids through activation of initiation proteins. The protein is Chaperone protein DnaJ of Methylobacillus flagellatus (strain ATCC 51484 / DSM 6875 / VKM B-1610 / KT).